Reading from the N-terminus, the 127-residue chain is Small ribosomal subunit protein bS6 (127 aa).

It belongs to the bacterial ribosomal protein bS6 family.

Binds together with bS18 to 16S ribosomal RNA. This is Small ribosomal subunit protein bS6 from Acinetobacter baumannii (strain AB0057).